Consider the following 250-residue polypeptide: MLFLHDVWVNWFEGEENGYNVCHFHEWRKEDSVELLDQVPLLKVQSPLYDYIENDLSELPKTLLESVFEKSYIRKNHERRKLEYCFVVTDGIRIIAVDTIGYSIPVRKSRLIPRQEQLVYEMVKDVKAEEYEFSQDSLESSKEYHILSLPPQHISGLTRKERQLKQLMFMALDQLKGLQNRAEIAYWYTEWNPRMYNQIKRMSFEEIWNMLYNETIDGWSENHLAFCEKMIKGQPFFEKLWEMENESKVN.

The protein belongs to the UPF0736 family.

This Bacillus pumilus (strain SAFR-032) protein is UPF0736 protein BPUM_1067.